A 151-amino-acid chain; its full sequence is Regulatory protein RecX (151 aa).

The protein belongs to the RecX family.

The protein localises to the cytoplasm. In terms of biological role, modulates RecA activity. The polypeptide is Regulatory protein RecX (Haemophilus ducreyi (strain 35000HP / ATCC 700724)).